Here is a 333-residue protein sequence, read N- to C-terminus: Nucleoid-associated protein VC0395_A1624/VC395_2154 (333 aa).

Belongs to the YejK family.

The protein resides in the cytoplasm. The protein localises to the nucleoid. This is Nucleoid-associated protein VC0395_A1624/VC395_2154 from Vibrio cholerae serotype O1 (strain ATCC 39541 / Classical Ogawa 395 / O395).